Here is a 227-residue protein sequence, read N- to C-terminus: MSTAIVVFSGGQDSTTCLIQALTQYDHVHCITFDYGQRHNQEIEVAKKVSIELGAASHKVMDVGLLNELAVSSLTRDNIPVSHELQENGLPNSFVPGRNILFLTLAGIYAYQLGAEAVITGVCETDFSGYPDCRDEFVKSINQSLVLGMDRQLEIKTPLMWLNKAETWALADKYGKLDYVRNHTLTCYNGVIGDGCGDCPSCDLRKNGLDAYLENKEPVMADLESKL.

An ATP-binding site is contributed by Phe8–Leu18. Positions 187, 196, 199, and 202 each coordinate Zn(2+).

This sequence belongs to the QueC family. Requires Zn(2+) as cofactor.

It carries out the reaction 7-carboxy-7-deazaguanine + NH4(+) + ATP = 7-cyano-7-deazaguanine + ADP + phosphate + H2O + H(+). It functions in the pathway purine metabolism; 7-cyano-7-deazaguanine biosynthesis. In terms of biological role, catalyzes the ATP-dependent conversion of 7-carboxy-7-deazaguanine (CDG) to 7-cyano-7-deazaguanine (preQ(0)). This is 7-cyano-7-deazaguanine synthase from Aliivibrio fischeri (strain ATCC 700601 / ES114) (Vibrio fischeri).